The sequence spans 513 residues: NAD(P)H-quinone oxidoreductase subunit 2 (513 aa).

14 helical membrane passes run 15–35, 43–63, 80–100, 110–130, 133–153, 168–188, 211–231, 245–265, 281–301, 307–327, 335–355, 379–399, 401–421, and 467–487; these read VIWPEGILIITLMVILIGDLI, WLPYVAIAGLLAAVVALYFTW, LSIVFRAIIALSTASTVLMSI, LAEFLAIMLTATLGGMFLSGA, LVMIFISLEMLSISSYLMTGY, LLIGASSSAIFLYGVSLLYGL, LALAIALVFVIAGIAFKISAV, PTPVVAFLSVGSKAAGFALAI, FIFIALAILSMILGNVVALAQ, MLAYSSIGQAGFVMIGLTAGT, IFYLLIYLFMNLGAFACVILF, LCLSICLLSLGGIPPLAGFFG, IYLFWAGWQAGLYALVLVGLV, and VGIVLSLVATSLAGILSNPLF.

The protein belongs to the complex I subunit 2 family. As to quaternary structure, NDH-1 can be composed of about 15 different subunits; different subcomplexes with different compositions have been identified which probably have different functions.

It localises to the cellular thylakoid membrane. The catalysed reaction is a plastoquinone + NADH + (n+1) H(+)(in) = a plastoquinol + NAD(+) + n H(+)(out). It catalyses the reaction a plastoquinone + NADPH + (n+1) H(+)(in) = a plastoquinol + NADP(+) + n H(+)(out). In terms of biological role, NDH-1 shuttles electrons from an unknown electron donor, via FMN and iron-sulfur (Fe-S) centers, to quinones in the respiratory and/or the photosynthetic chain. The immediate electron acceptor for the enzyme in this species is believed to be plastoquinone. Couples the redox reaction to proton translocation, and thus conserves the redox energy in a proton gradient. Cyanobacterial NDH-1 also plays a role in inorganic carbon-concentration. This chain is NAD(P)H-quinone oxidoreductase subunit 2, found in Microcystis aeruginosa (strain NIES-843 / IAM M-2473).